A 300-amino-acid polypeptide reads, in one-letter code: Acetylglutamate kinase (300 aa).

Substrate-binding positions include 73–74 (GG), Arg95, and Asn197.

The protein belongs to the acetylglutamate kinase family. ArgB subfamily.

It is found in the cytoplasm. The enzyme catalyses N-acetyl-L-glutamate + ATP = N-acetyl-L-glutamyl 5-phosphate + ADP. The protein operates within amino-acid biosynthesis; L-arginine biosynthesis; N(2)-acetyl-L-ornithine from L-glutamate: step 2/4. Catalyzes the ATP-dependent phosphorylation of N-acetyl-L-glutamate. The polypeptide is Acetylglutamate kinase (Bordetella petrii (strain ATCC BAA-461 / DSM 12804 / CCUG 43448)).